A 271-amino-acid chain; its full sequence is RELT-like protein 1 (271 aa).

Positions 1–23 (MAPRGLPGSAVLAAAVFVGGAVS) are cleaved as a signal peptide. The Extracellular segment spans residues 24-57 (SPLVRSDHSGSHPLPSKTETTPSPTNNNGNGHPE). A disordered region spans residues 27–52 (VRSDHSGSHPLPSKTETTPSPTNNNG). The segment covering 36 to 52 (PLPSKTETTPSPTNNNG) has biased composition (low complexity). A helical membrane pass occupies residues 58-78 (YIAYALVPVFFVMGLFGVLIC). Topologically, residues 79 to 271 (HLLKKKGYRC…PVKRQQSDSE (193 aa)) are cytoplasmic. Phosphoserine occurs at positions 109 and 114. Disordered regions lie at residues 144-168 (CDPE…LSPG) and 231-271 (TKVE…SDSE). Positions 155 to 165 (PGSPPVSPGPL) are enriched in pro residues. A compositionally biased stretch (basic and acidic residues) spans 231–244 (TKVEPKSNQKERRS). 2 positions are modified to phosphoserine: S244 and S247.

This sequence belongs to the RELT family. As to quaternary structure, interacts with RELT, RELL2, OXSR1 and PLSCR1.

The protein localises to the cell membrane. Functionally, induces activation of MAPK14/p38 cascade, when overexpressed. Induces apoptosis, when overexpressed. This Bos taurus (Bovine) protein is RELT-like protein 1 (RELL1).